Here is a 407-residue protein sequence, read N- to C-terminus: Arginine deiminase (407 aa).

The active-site Amidino-cysteine intermediate is Cys-397.

This sequence belongs to the arginine deiminase family.

The protein localises to the cytoplasm. The enzyme catalyses L-arginine + H2O = L-citrulline + NH4(+). Its pathway is amino-acid degradation; L-arginine degradation via ADI pathway; carbamoyl phosphate from L-arginine: step 1/2. The polypeptide is Arginine deiminase (Listeria welshimeri serovar 6b (strain ATCC 35897 / DSM 20650 / CCUG 15529 / CIP 8149 / NCTC 11857 / SLCC 5334 / V8)).